The chain runs to 602 residues: NADH-quinone oxidoreductase subunit C/D (602 aa).

Positions 1–192 (MVNNMTDLTA…DPFELTKAKQ (192 aa)) are NADH dehydrogenase I subunit C. Positions 216 to 602 (DFMFLNLGPN…IDFVMSDVDR (387 aa)) are NADH dehydrogenase I subunit D.

In the N-terminal section; belongs to the complex I 30 kDa subunit family. This sequence in the C-terminal section; belongs to the complex I 49 kDa subunit family. NDH-1 is composed of 13 different subunits. Subunits NuoB, CD, E, F, and G constitute the peripheral sector of the complex.

The protein localises to the cell inner membrane. It carries out the reaction a quinone + NADH + 5 H(+)(in) = a quinol + NAD(+) + 4 H(+)(out). NDH-1 shuttles electrons from NADH, via FMN and iron-sulfur (Fe-S) centers, to quinones in the respiratory chain. The immediate electron acceptor for the enzyme in this species is believed to be ubiquinone. Couples the redox reaction to proton translocation (for every two electrons transferred, four hydrogen ions are translocated across the cytoplasmic membrane), and thus conserves the redox energy in a proton gradient. The protein is NADH-quinone oxidoreductase subunit C/D of Klebsiella pneumoniae (strain 342).